The sequence spans 185 residues: Probable chorismate pyruvate-lyase (185 aa).

Residues Arg-75, Leu-113, and Glu-170 each coordinate substrate.

Belongs to the UbiC family.

It localises to the cytoplasm. The catalysed reaction is chorismate = 4-hydroxybenzoate + pyruvate. It participates in cofactor biosynthesis; ubiquinone biosynthesis. Functionally, removes the pyruvyl group from chorismate, with concomitant aromatization of the ring, to provide 4-hydroxybenzoate (4HB) for the ubiquinone pathway. This chain is Probable chorismate pyruvate-lyase, found in Coxiella burnetii (strain RSA 493 / Nine Mile phase I).